The primary structure comprises 163 residues: Protein-export protein SecB (163 aa).

This sequence belongs to the SecB family. Homotetramer, a dimer of dimers. One homotetramer interacts with 1 SecA dimer.

It localises to the cytoplasm. In terms of biological role, one of the proteins required for the normal export of preproteins out of the cell cytoplasm. It is a molecular chaperone that binds to a subset of precursor proteins, maintaining them in a translocation-competent state. It also specifically binds to its receptor SecA. This Pseudomonas aeruginosa (strain LESB58) protein is Protein-export protein SecB.